The following is a 370-amino-acid chain: Cytochrome b (370 aa).

The next 4 helical transmembrane spans lie at 25–45 (FGSMLLACLTLQLLTGFFLAV), 69–90 (WMMQNLHAIGASMFFICIYIHI), 105–125 (WLSGTTLLIMLMATAFFGYVL), and 170–190 (FFALHFILPFGIISLSSLHIL). Residues histidine 75 and histidine 89 each coordinate heme b. Heme b contacts are provided by histidine 174 and histidine 188. Histidine 193 lines the a ubiquinone pocket. 4 helical membrane-spanning segments follow: residues 218 to 238 (YKDMLMLTIMTIMLLTIVSFF), 280 to 300 (LGGALALTMSIMILLTMPFTH), 312 to 332 (LMQLTFWTFTATFLVISWTAT), and 339 to 358 (FTTISQVAALMYFLFFISNP).

This sequence belongs to the cytochrome b family. As to quaternary structure, the cytochrome bc1 complex contains 3 respiratory subunits (MT-CYB, CYC1 and UQCRFS1), 2 core proteins (UQCRC1 and UQCRC2) and probably 6 low-molecular weight proteins. Requires heme b as cofactor.

The protein localises to the mitochondrion inner membrane. In terms of biological role, component of the ubiquinol-cytochrome c reductase complex (complex III or cytochrome b-c1 complex) that is part of the mitochondrial respiratory chain. The b-c1 complex mediates electron transfer from ubiquinol to cytochrome c. Contributes to the generation of a proton gradient across the mitochondrial membrane that is then used for ATP synthesis. The polypeptide is Cytochrome b (MT-CYB) (Chilabothrus striatus (Haitian boa constrictor)).